We begin with the raw amino-acid sequence, 225 residues long: Glutathione S-transferase U2 (225 aa).

Residues 6–85 (ESVKLLGFWI…YIDQTWNNNP (80 aa)) form the GST N-terminal domain. Residues 16-17 (SP), 42-43 (KK), 56-57 (KV), and 69-70 (ES) each bind glutathione. The region spanning 90-217 (DPYEKAMVRF…EKHIERMKKI (128 aa)) is the GST C-terminal domain. Position 151 is a phosphothreonine (Thr-151).

The protein belongs to the GST superfamily. Tau family.

Its subcellular location is the cytoplasm. It is found in the cytosol. It catalyses the reaction RX + glutathione = an S-substituted glutathione + a halide anion + H(+). Functionally, may be involved in the conjugation of reduced glutathione to a wide number of exogenous and endogenous hydrophobic electrophiles and have a detoxification role against certain herbicides. The protein is Glutathione S-transferase U2 (GSTU2) of Arabidopsis thaliana (Mouse-ear cress).